Consider the following 463-residue polypeptide: Methionine aminopeptidase 2-2 (463 aa).

The segment at 1-107 is disordered; the sequence is MGAKTFEGGD…VPLSQLFPDG (107 aa). The segment covering 37–53 has biased composition (acidic residues); it reads EDGDGEFGTDDDDDGDG. The segment covering 69–83 has biased composition (basic residues); that stretch reads PKKRKRSKKKKSNKK. His215 is a binding site for substrate. A divalent metal cation is bound by residues Asp236, Asp247, and His316. His324 contributes to the substrate binding site. A divalent metal cation-binding residues include Glu349 and Glu444.

This sequence belongs to the peptidase M24A family. Methionine aminopeptidase eukaryotic type 2 subfamily. Co(2+) serves as cofactor. The cofactor is Zn(2+). Requires Mn(2+) as cofactor. It depends on Fe(2+) as a cofactor.

The protein resides in the cytoplasm. The catalysed reaction is Release of N-terminal amino acids, preferentially methionine, from peptides and arylamides.. Its function is as follows. Cotranslationally removes the N-terminal methionine from nascent proteins. The N-terminal methionine is often cleaved when the second residue in the primary sequence is small and uncharged (Met-Ala-, Cys, Gly, Pro, Ser, Thr, or Val). The polypeptide is Methionine aminopeptidase 2-2 (Talaromyces marneffei (strain ATCC 18224 / CBS 334.59 / QM 7333) (Penicillium marneffei)).